A 596-amino-acid polypeptide reads, in one-letter code: Arginine--tRNA ligase (596 aa).

The 'HIGH' region motif lies at 123 to 133 (PNTNKPLHLGH).

Belongs to the class-I aminoacyl-tRNA synthetase family. Monomer.

It localises to the cytoplasm. It carries out the reaction tRNA(Arg) + L-arginine + ATP = L-arginyl-tRNA(Arg) + AMP + diphosphate. The polypeptide is Arginine--tRNA ligase (Amoebophilus asiaticus (strain 5a2)).